The sequence spans 369 residues: Phospho-N-acetylmuramoyl-pentapeptide-transferase (369 aa).

10 helical membrane-spanning segments follow: residues 2–22 (IAIL…TPFF), 54–74 (GLVI…FLGL), 80–100 (GLLV…DDIL), 113–133 (FYKV…TFLV), 158–178 (ALFS…LLWI), 195–215 (LDGL…VIGF), 241–261 (PLDM…FLWW), 268–288 (IMMG…LSIL), 293–313 (LLFL…ILQI), and 347–367 (FWII…ADWL).

This sequence belongs to the glycosyltransferase 4 family. MraY subfamily. It depends on Mg(2+) as a cofactor.

It is found in the cell membrane. The catalysed reaction is UDP-N-acetyl-alpha-D-muramoyl-L-alanyl-gamma-D-glutamyl-meso-2,6-diaminopimeloyl-D-alanyl-D-alanine + di-trans,octa-cis-undecaprenyl phosphate = di-trans,octa-cis-undecaprenyl diphospho-N-acetyl-alpha-D-muramoyl-L-alanyl-D-glutamyl-meso-2,6-diaminopimeloyl-D-alanyl-D-alanine + UMP. Its pathway is cell wall biogenesis; peptidoglycan biosynthesis. In terms of biological role, catalyzes the initial step of the lipid cycle reactions in the biosynthesis of the cell wall peptidoglycan: transfers peptidoglycan precursor phospho-MurNAc-pentapeptide from UDP-MurNAc-pentapeptide onto the lipid carrier undecaprenyl phosphate, yielding undecaprenyl-pyrophosphoryl-MurNAc-pentapeptide, known as lipid I. The sequence is that of Phospho-N-acetylmuramoyl-pentapeptide-transferase from Tropheryma whipplei (strain Twist) (Whipple's bacillus).